A 74-amino-acid chain; its full sequence is Translation initiation factor IF-1, chloroplastic (74 aa).

The S1-like domain maps to 1 to 72 (MEKQNIIEME…TKGRITYRLR (72 aa)).

Belongs to the IF-1 family. In terms of assembly, component of the 30S ribosomal translation pre-initiation complex which assembles on the 30S ribosome in the order IF-2 and IF-3, IF-1 and N-formylmethionyl-tRNA(fMet); mRNA recruitment can occur at any time during PIC assembly.

It localises to the plastid. Its subcellular location is the chloroplast. Functionally, one of the essential components for the initiation of protein synthesis. Stabilizes the binding of IF-2 and IF-3 on the 30S subunit to which N-formylmethionyl-tRNA(fMet) subsequently binds. Helps modulate mRNA selection, yielding the 30S pre-initiation complex (PIC). Upon addition of the 50S ribosomal subunit IF-1, IF-2 and IF-3 are released leaving the mature 70S translation initiation complex. This Chlorokybus atmophyticus (Soil alga) protein is Translation initiation factor IF-1, chloroplastic.